The chain runs to 233 residues: Ribosomal RNA-processing protein 14-C (233 aa).

The stretch at 32-65 (DRALLLQRRKEKAKARAEAKKLAKKESKAKQESK) forms a coiled coil. Residues 47–64 (RAEAKKLAKKESKAKQES) are compositionally biased toward basic and acidic residues. Disordered regions lie at residues 47–87 (RAEA…DNHK), 130–149 (KRRI…ESDK), and 164–233 (DNEQ…SKKK). Position 75 is a phosphoserine (Ser75). Residues 122-223 (ALKHLEAKKR…ESKKSKKGKA (102 aa)) are a coiled coil. 2 stretches are compositionally biased toward basic and acidic residues: residues 133–149 (IESM…ESDK) and 180–209 (KKKS…EENL). Positions 210 to 233 (KKRRESKKSKKGKAPKKKKPSKKK) are enriched in basic residues.

It belongs to the SURF6 family. Component of the 90S and 60S pre-ribosomal particles.

It localises to the nucleus. It is found in the nucleolus. Involved in ribosome biogenesis and cell polarity. Required for the synthesis of both 40S and 60S ribosomal subunits and may also play some direct role in correct positioning of the mitotic spindle during mitosis. This is Ribosomal RNA-processing protein 14-C (rrp14c) from Schizosaccharomyces pombe (strain 972 / ATCC 24843) (Fission yeast).